A 293-amino-acid chain; its full sequence is Kallikrein-5 (293 aa).

Residues 1 to 22 (MATARPPWMWVLCALITALLLG) form the signal peptide. Residues 37–49 (HPSNTVPSGSNQD) show a composition bias toward polar residues. A disordered region spans residues 37–68 (HPSNTVPSGSNQDLGAGAGEDARSDDSSSRII). The Peptidase S1 domain occupies 67–290 (IINGSDCDMH…FTKWIQETIQ (224 aa)). N-linked (GlcNAc...) asparagine glycosylation occurs at Asn-69. Intrachain disulfides connect Cys-73–Cys-206, Cys-93–Cys-109, Cys-178–Cys-279, Cys-185–Cys-251, Cys-217–Cys-231, and Cys-241–Cys-266. Catalysis depends on charge relay system residues His-108 and Asp-153. 2 N-linked (GlcNAc...) asparagine glycosylation sites follow: Asn-173 and Asn-208. Ser-245 acts as the Charge relay system in catalysis. A glycan (N-linked (GlcNAc...) asparagine) is linked at Asn-252.

It belongs to the peptidase S1 family. Kallikrein subfamily. As to quaternary structure, interacts with SPINK9. Expressed in skin, breast, brain and testis. Expressed at the stratum granulosum of palmar skin.

It is found in the secreted. Inhibited by Zn2+. In terms of biological role, may be involved in desquamation. The sequence is that of Kallikrein-5 from Homo sapiens (Human).